We begin with the raw amino-acid sequence, 174 residues long: Bifunctional protein PyrR 2 (174 aa).

Substrate is bound by residues 39 to 40, 100 to 108, and Arg-133; these read TR and DDVLFTGRT. Residues 96–108 carry the PRPP-binding motif; the sequence is VILVDDVLFTGRT.

The protein belongs to the purine/pyrimidine phosphoribosyltransferase family. PyrR subfamily. Homodimer and homohexamer; in equilibrium.

The enzyme catalyses UMP + diphosphate = 5-phospho-alpha-D-ribose 1-diphosphate + uracil. Its function is as follows. Regulates transcriptional attenuation of the pyrimidine nucleotide (pyr) operon by binding in a uridine-dependent manner to specific sites on pyr mRNA. This disrupts an antiterminator hairpin in the RNA and favors formation of a downstream transcription terminator, leading to a reduced expression of downstream genes. Functionally, also displays a weak uracil phosphoribosyltransferase activity which is not physiologically significant. The sequence is that of Bifunctional protein PyrR 2 (pyrR2) from Lactiplantibacillus plantarum (strain ATCC BAA-793 / NCIMB 8826 / WCFS1) (Lactobacillus plantarum).